The primary structure comprises 23 residues: Thymidine phosphorylase (23 aa).

The protein belongs to the thymidine/pyrimidine-nucleoside phosphorylase family. As to quaternary structure, homodimer.

The catalysed reaction is thymidine + phosphate = 2-deoxy-alpha-D-ribose 1-phosphate + thymine. In terms of biological role, the enzymes which catalyze the reversible phosphorolysis of pyrimidine nucleosides are involved in the degradation of these compounds and in their utilization as carbon and energy sources, or in the rescue of pyrimidine bases for nucleotide synthesis. This Lacticaseibacillus rhamnosus (Lactobacillus rhamnosus) protein is Thymidine phosphorylase (deoA).